The chain runs to 526 residues: Nuclear pore glycoprotein p62 (526 aa).

An N-acetylserine modification is found at Ser-2. Repeat copies occupy residues Phe-6–Gly-7, Phe-46–Gly-47, Phe-78–Gly-79, and Phe-115–Gly-116. Positions Phe-6–Gly-144 are 5 X 2 AA repeats of F-G. The tract at residues Gly-43–Pro-82 is disordered. Over residues Phe-46–Thr-81 the composition is skewed to low complexity. Residues Ser-128–Ala-137 show a composition bias toward polar residues. Positions Ser-128–Thr-148 are disordered. Repeat unit 5 spans residues Phe-143–Gly-144. Residues Met-332–Leu-462 are required for centrosome localization. A coiled-coil region spans residues Met-332 to Leu-462. The O-linked (GlcNAc) threonine glycan is linked to Thr-377. Residues Ser-412 and Ser-422 each carry the phosphoserine modification. Residue Ser-472 is glycosylated (O-linked (GlcNAc) serine).

The protein belongs to the nucleoporin NSP1/NUP62 family. Component of the p62 complex, a complex at least composed of NUP62, NUP54, and NUP58. Interacts with NUP88. Interacts with NUTF2. Interacts with HIKESHI. Interacts with OSBPL8. Interacts with CAPG. Interacts with SAS6 and TUBG1 at the centrosome. Interacts with MCM3AP. In terms of processing, O-glycosylated. Post-translationally, the inner channel of the NPC has a different redox environment from the cytoplasm and allows the formation of interchain disulfide bonds between some nucleoporins, the significant increase of these linkages upon oxidative stress reduces the permeability of the NPC.

The protein localises to the nucleus. The protein resides in the nuclear pore complex. It localises to the cytoplasm. It is found in the cytoskeleton. Its subcellular location is the spindle pole. The protein localises to the nucleus envelope. The protein resides in the microtubule organizing center. It localises to the centrosome. Essential component of the nuclear pore complex. The N-terminal is probably involved in nucleocytoplasmic transport. The C-terminal is involved in protein-protein interaction probably via coiled-coil formation, promotes its association with centrosomes and may function in anchorage of p62 to the pore complex. Plays a role in mitotic cell cycle progression by regulating centrosome segregation, centriole maturation and spindle orientation. It might be involved in protein recruitment to the centrosome after nuclear breakdown. In Mus musculus (Mouse), this protein is Nuclear pore glycoprotein p62 (Nup62).